The primary structure comprises 343 residues: Anthranilate phosphoribosyltransferase (343 aa).

5-phospho-alpha-D-ribose 1-diphosphate contacts are provided by residues glycine 86, 89 to 90, threonine 94, 96 to 99, 114 to 122, and serine 126; these read GD, NIST, and KHGNRSASG. Glycine 86 contributes to the anthranilate binding site. Serine 98 serves as a coordination point for Mg(2+). Asparagine 117 provides a ligand contact to anthranilate. Arginine 172 is a binding site for anthranilate. Residues aspartate 231 and glutamate 232 each contribute to the Mg(2+) site.

Belongs to the anthranilate phosphoribosyltransferase family. In terms of assembly, homodimer. It depends on Mg(2+) as a cofactor.

It catalyses the reaction N-(5-phospho-beta-D-ribosyl)anthranilate + diphosphate = 5-phospho-alpha-D-ribose 1-diphosphate + anthranilate. It participates in amino-acid biosynthesis; L-tryptophan biosynthesis; L-tryptophan from chorismate: step 2/5. Catalyzes the transfer of the phosphoribosyl group of 5-phosphorylribose-1-pyrophosphate (PRPP) to anthranilate to yield N-(5'-phosphoribosyl)-anthranilate (PRA). The sequence is that of Anthranilate phosphoribosyltransferase from Synechococcus sp. (strain JA-2-3B'a(2-13)) (Cyanobacteria bacterium Yellowstone B-Prime).